A 1118-amino-acid chain; its full sequence is Carbamoyl phosphate synthase arginine-specific large chain (1118 aa).

The tract at residues 23–420 (QLVEGVNSVL…AFQKALRQVD (398 aa)) is carboxyphosphate synthetic domain. ATP is bound by residues R150, R190, G196, G197, K227, L229, E234, G260, V261, H262, Q303, and E317. Positions 154–346 (ASALKDINIP…LAYTAAKIGL (193 aa)) constitute an ATP-grasp 1 domain. Mg(2+) contacts are provided by Q303, E317, and N319. Residues Q303, E317, and N319 each contribute to the Mn(2+) site. The segment at 421-573 (PSLLGFQGST…YTTYNATKND (153 aa)) is oligomerization domain. The segment at 574–958 (VEFNENGMLV…SYWTAIQSTM (385 aa)) is carbamoyl phosphate synthetic domain. The region spanning 698 to 890 (SSILDSIDVD…FIEIAVKAFL (193 aa)) is the ATP-grasp 2 domain. Residues R734, K773, I775, E780, G805, V806, H807, S808, Q848, and E861 each coordinate ATP. Positions 848, 861, and 863 each coordinate Mg(2+). Q848, E861, and N863 together coordinate Mn(2+). The allosteric domain stretch occupies residues 959-1102 (NFHVPLPPSG…KILESHDVIV (144 aa)). The MGS-like domain maps to 960 to 1118 (FHVPLPPSGI…WDEFIGFKAY (159 aa)).

The protein belongs to the CarB family. In terms of assembly, heterodimer composed of 2 chains; the small (or glutamine) chain promotes the hydrolysis of glutamine to ammonia, which is used by the large (or ammonia) chain to synthesize carbamoyl phosphate. Mg(2+) is required as a cofactor. The cofactor is Mn(2+).

The protein localises to the cytoplasm. It catalyses the reaction hydrogencarbonate + L-glutamine + 2 ATP + H2O = carbamoyl phosphate + L-glutamate + 2 ADP + phosphate + 2 H(+). The enzyme catalyses hydrogencarbonate + NH4(+) + 2 ATP = carbamoyl phosphate + 2 ADP + phosphate + 2 H(+). Its pathway is amino-acid biosynthesis; L-arginine biosynthesis; carbamoyl phosphate from bicarbonate: step 1/1. Large subunit of the arginine-specific carbamoyl phosphate synthase (CPSase). CPSase catalyzes the formation of carbamoyl phosphate from the ammonia moiety of glutamine, hydrogencarbonate, and phosphate donated by ATP, constituting the first step of 2 biosynthetic pathways, one leading to arginine and/or urea and the other to pyrimidine nucleotides. The large subunit (synthetase) binds the substrates ammonia (free or transferred from glutamine from the small subunit), hydrogencarbonate and ATP and carries out an ATP-coupled ligase reaction, activating hydrogencarbonate by forming carboxy phosphate which reacts with ammonia to form carbamoyl phosphate. The protein is Carbamoyl phosphate synthase arginine-specific large chain (CPA2) of Saccharomyces cerevisiae (strain ATCC 204508 / S288c) (Baker's yeast).